The following is a 780-amino-acid chain: E3 SUMO-protein ligase gei-17 (780 aa).

The segment at 181–210 (APLHSSFPNHGRSSQQSLQKSEKSNRPKKM) is disordered. The region spanning 203–367 (KSNRPKKMYA…AAGVYFVHRV (165 aa)) is the PINIT domain. The segment at 400-485 (GEDDIAMDRL…LAKVDKNTTE (86 aa)) adopts an SP-RING-type zinc-finger fold. Residues Cys-431, His-433, Cys-454, and Cys-457 each coordinate Zn(2+). Polar residues predominate over residues 519 to 530 (GTASCSSTNGNG). 3 disordered regions span residues 519 to 544 (GTASCSSTNGNGLANEAAKKKPADDD), 560 to 594 (IMNSLNDSFSPGRHTASAELAAQKTPPQQKKKTKD), and 732 to 755 (QQHHLQQQQQQQQSPQIMSPSFYA). The span at 732-749 (QQHHLQQQQQQQQSPQIM) shows a compositional bias: low complexity.

The protein belongs to the PIAS family. May interact with gex-3.

It functions in the pathway protein modification; protein sumoylation. Its function is as follows. Functions as an E3-type smo-1 ligase. Mediates smo-1 conjugation to air-2 in vitro and is required for proper chromosome alignment. In the early embryo, specifically suppresses checkpoint activation in response to DNA damage, maybe by promoting mus-101 sumoylation. In embryos, plays a role in determining telomere localization in the nucleus. Acts with pie-1 to promote piRNA-mediated silencing and fertility in the adult germline. This is E3 SUMO-protein ligase gei-17 from Caenorhabditis elegans.